We begin with the raw amino-acid sequence, 166 residues long: Large ribosomal subunit protein uL10 (166 aa).

Belongs to the universal ribosomal protein uL10 family. As to quaternary structure, part of the ribosomal stalk of the 50S ribosomal subunit. The N-terminus interacts with L11 and the large rRNA to form the base of the stalk. The C-terminus forms an elongated spine to which L12 dimers bind in a sequential fashion forming a multimeric L10(L12)X complex.

Forms part of the ribosomal stalk, playing a central role in the interaction of the ribosome with GTP-bound translation factors. In Streptococcus pneumoniae (strain ATCC 700669 / Spain 23F-1), this protein is Large ribosomal subunit protein uL10.